Reading from the N-terminus, the 561-residue chain is Asparagine synthetase [glutamine-hydrolyzing] (561 aa).

Cys-2 serves as the catalytic For GATase activity. In terms of domain architecture, Glutamine amidotransferase type-2 spans 2–191 (CGIWALFGSD…PGHYEVLDLK (190 aa)). Residues 49–53 (RLAVV), 75–77 (NGE), and Asp-97 contribute to the L-glutamine site. The Asparagine synthetase domain occupies 213–536 (HAIYDSVEKL…PGRADWLTHY (324 aa)). ATP is bound by residues Leu-256, Ile-288, and 363 to 364 (SG). Lys-385 carries the post-translational modification N6-acetyllysine. Thr-545 bears the Phosphothreonine mark. Position 557 is a phosphoserine (Ser-557).

It carries out the reaction L-aspartate + L-glutamine + ATP + H2O = L-asparagine + L-glutamate + AMP + diphosphate + H(+). The protein operates within amino-acid biosynthesis; L-asparagine biosynthesis; L-asparagine from L-aspartate (L-Gln route): step 1/1. The protein is Asparagine synthetase [glutamine-hydrolyzing] (Asns) of Rattus norvegicus (Rat).